A 374-amino-acid polypeptide reads, in one-letter code: MSKRDYYEVLGVARTATDDELKKAYRRCAMKFHPDRNPGDAAAEASFKECKEAYEVLSDGNKRRMYDSHGHAAFEHGMGGGGPGGPDMNDIFGDIFGNIFGGGGGGPRQARRGADIGYVMELDLEEAVRGVERRIEIPTLAECGDCDGSGSEDGKVETCNVCHGRGQVRIQRGIFAMQQACHNCGGRGQIIAKPCKTCHGNGRVEEDKVLSVKVPAGVDTGDRIRLQGEGEAGPAGTPPGDLYVEVRVREHAIFQRDGDDLHCEVPIRISQAALGDTVRVATLGGEAEIRIPAETQTGKLFRLRGKGVRSVRSRSEGDLYCRVVVETPVNLTPEQRKLLEQFEATFVGEEARKHSPKSATFMDGVKGFWDRMTS.

Residues 5–70 (DYYEVLGVAR…NKRRMYDSHG (66 aa)) enclose the J domain. The CR-type zinc finger occupies 130-207 (GVERRIEIPT…CHGNGRVEED (78 aa)). Zn(2+) is bound by residues cysteine 143, cysteine 146, cysteine 159, cysteine 162, cysteine 181, cysteine 184, cysteine 195, and cysteine 198. 4 CXXCXGXG motif repeats span residues 143–150 (CGDCDGSG), 159–166 (CNVCHGRG), 181–188 (CHNCGGRG), and 195–202 (CKTCHGNG).

This sequence belongs to the DnaJ family. Homodimer. It depends on Zn(2+) as a cofactor.

The protein localises to the cytoplasm. In terms of biological role, participates actively in the response to hyperosmotic and heat shock by preventing the aggregation of stress-denatured proteins and by disaggregating proteins, also in an autonomous, DnaK-independent fashion. Unfolded proteins bind initially to DnaJ; upon interaction with the DnaJ-bound protein, DnaK hydrolyzes its bound ATP, resulting in the formation of a stable complex. GrpE releases ADP from DnaK; ATP binding to DnaK triggers the release of the substrate protein, thus completing the reaction cycle. Several rounds of ATP-dependent interactions between DnaJ, DnaK and GrpE are required for fully efficient folding. Also involved, together with DnaK and GrpE, in the DNA replication of plasmids through activation of initiation proteins. In Stenotrophomonas maltophilia (strain K279a), this protein is Chaperone protein DnaJ.